The primary structure comprises 217 residues: Small ribosomal subunit protein uS3 (217 aa).

The KH type-2 domain maps to 29–97 (ADYLHEDLAI…AQLNKLTGKQ (69 aa)).

Belongs to the universal ribosomal protein uS3 family. Part of the 30S ribosomal subunit. Forms a tight complex with proteins S10 and S14.

Binds the lower part of the 30S subunit head. Binds mRNA in the 70S ribosome, positioning it for translation. The chain is Small ribosomal subunit protein uS3 from Streptococcus mutans serotype c (strain ATCC 700610 / UA159).